A 444-amino-acid polypeptide reads, in one-letter code: MLANVIVIGAQWGDEGKGKITDLLSRSADVVVRPQGGVNAGHTIVVNDQTFKLHLIPSGILYPDTECIIGSGTVIDPKVLLQEFDQLEALDVSLDRLYISQTAHVTMPFHRLLDQASEEKRGEHKIGTTGRGIGPTYADKSERMGIRVVDLMNPEILRKKLLWTVEYKNVVLDKLYDLPPLDPETVIAEYTTYADRLRPHVVDSSLKIYDAIHQRKNILFEGAQGTLLDLDHGTYPYVTSSNPIAGGACVGAGIGPTMIDRVIGVAKAYTTRVGEGPFPTELDGELNQHLCDRGAEFGTTTGRRRRCGWFDGVIGRYAVRINGLDCLAITKLDVLDQLAEIKVCVAYELDGKTCDHFPGNAAEFARCQPIYKTLPGWQCSTEECRTLEDLPPQALDYLKFLAELMEVPIAIVSLGASRDQTIIVEDPIHGPKRALLYANGDPLA.

GTP-binding positions include 13-19 (GDEGKGK) and 41-43 (GHT). The Proton acceptor role is filled by Asp14. 2 residues coordinate Mg(2+): Asp14 and Gly41. Residues 14-17 (DEGK), 39-42 (NAGH), Thr129, Arg143, Gln224, Thr239, and Arg303 contribute to the IMP site. The active-site Proton donor is His42. 299 to 305 (TTTGRRR) contacts substrate. Residues Arg305, 331 to 333 (KLD), and 413 to 415 (SLG) contribute to the GTP site.

It belongs to the adenylosuccinate synthetase family. As to quaternary structure, homodimer. Requires Mg(2+) as cofactor.

It is found in the cytoplasm. It catalyses the reaction IMP + L-aspartate + GTP = N(6)-(1,2-dicarboxyethyl)-AMP + GDP + phosphate + 2 H(+). Its pathway is purine metabolism; AMP biosynthesis via de novo pathway; AMP from IMP: step 1/2. Functionally, plays an important role in the de novo pathway of purine nucleotide biosynthesis. Catalyzes the first committed step in the biosynthesis of AMP from IMP. This is Adenylosuccinate synthetase from Synechocystis sp. (strain ATCC 27184 / PCC 6803 / Kazusa).